Here is a 944-residue protein sequence, read N- to C-terminus: Valine--tRNA ligase (944 aa).

The short motif at 43–53 (PNVTGTLHMGH) is the 'HIGH' region element. A 'KMSKS' region motif is present at residues 550–554 (KMSKS). Lys-553 is an ATP binding site. Positions 878 to 944 (LVDMDAERTR…TGLREQRAKL (67 aa)) form a coiled coil.

It belongs to the class-I aminoacyl-tRNA synthetase family. ValS type 1 subfamily. As to quaternary structure, monomer.

It is found in the cytoplasm. It catalyses the reaction tRNA(Val) + L-valine + ATP = L-valyl-tRNA(Val) + AMP + diphosphate. Its function is as follows. Catalyzes the attachment of valine to tRNA(Val). As ValRS can inadvertently accommodate and process structurally similar amino acids such as threonine, to avoid such errors, it has a 'posttransfer' editing activity that hydrolyzes mischarged Thr-tRNA(Val) in a tRNA-dependent manner. The sequence is that of Valine--tRNA ligase from Xanthomonas campestris pv. campestris (strain 8004).